The chain runs to 207 residues: MAKLDVYNTSHKKVGEIELSDAVFNDEVREYLIHEAVKIQLANRRAGTVAVKNRAAVSGSGKKPFKQKGTGQARQGCKRAPQYPGGGVAFGPQPKTYNLSMNKKARRAALRSALSLLFKNDKLTVLDAINLDTVSTKNFVGVLKGFSLDKALVVTDAENRNLELSARNIKNVKVLKTEGLNIFDLMKYQRVIFTENSVRKVEGALQS.

The disordered stretch occupies residues 59-78 (GSGKKPFKQKGTGQARQGCK).

Belongs to the universal ribosomal protein uL4 family. As to quaternary structure, part of the 50S ribosomal subunit.

Its function is as follows. One of the primary rRNA binding proteins, this protein initially binds near the 5'-end of the 23S rRNA. It is important during the early stages of 50S assembly. It makes multiple contacts with different domains of the 23S rRNA in the assembled 50S subunit and ribosome. Forms part of the polypeptide exit tunnel. The chain is Large ribosomal subunit protein uL4 from Geotalea daltonii (strain DSM 22248 / JCM 15807 / FRC-32) (Geobacter daltonii).